A 370-amino-acid polypeptide reads, in one-letter code: Accessory Sec system protein translocase subunit SecY2 (370 aa).

The next 9 helical transmembrane spans lie at 17 to 37 (IIFT…PAIT), 65 to 85 (VFSL…LFYY), 105 to 125 (IFTL…LLSH), 134 to 154 (WLII…SDLN), 155 to 175 (MRFG…RSIM), 188 to 208 (LLIS…FIEI), 240 to 260 (IAIM…NLIV), 276 to 296 (FSTP…SYGI), and 339 to 359 (WIGA…TLLI).

It belongs to the SecY/SEC61-alpha family. SecY2 subfamily. In terms of assembly, component of the accessory SecA2/SecY2 protein translocase complex required to export cell wall proteins. May form heterotrimers with SecE and SecG subunits.

It localises to the cell membrane. Part of the accessory SecA2/SecY2 system specifically required for export of possible cell wall proteins. The central subunit of a protein translocation channel. This is Accessory Sec system protein translocase subunit SecY2 from Staphylococcus carnosus (strain TM300).